Reading from the N-terminus, the 181-residue chain is Neuroblastoma suppressor of tumorigenicity 1 (181 aa).

The signal sequence occupies residues 1–16 (MMLRVLVGAVLPAMLL). Cystine bridges form between C35–C85, C49–C99, C59–C118, C63–C120, and C82–C123. Positions 35-124 (CEAKNITQIV…ILHCSCQACG (90 aa)) constitute a CTCK domain. The interval 132–181 (LSVYVQGEDGPGSQPGTHPHPHPHPHPGGQTPEPEDPPGAPHTEEEGAED) is disordered.

The protein belongs to the DAN family. As to quaternary structure, homodimer. As to expression, most abundant in normal lung and meningioma.

It localises to the secreted. Functionally, possible candidate as a tumor suppressor gene of neuroblastoma. May play an important role in preventing cells from entering the final stage (G1/S) of the transformation process. This chain is Neuroblastoma suppressor of tumorigenicity 1 (NBL1), found in Homo sapiens (Human).